The chain runs to 359 residues: 3-dehydroshikimate dehydratase (359 aa).

The protein belongs to the bacterial two-domain DSD family. Monomer.

The catalysed reaction is 3-dehydroshikimate = 3,4-dihydroxybenzoate + H2O. Its pathway is aromatic compound metabolism; 3,4-dihydroxybenzoate biosynthesis; 3,4-dihydroxybenzoate from 3-dehydroquinate: step 2/2. With respect to regulation, divalent cations such as Mg(2+), but also MO(2+), Mn(2+), Ba(2+), and Co(2+) activate the enzyme, whereas monovalent cations as K(+), Na(+), and NH4(+) decrease its activity slightly. 3-dehydroshikimate dehydratase; part of the qa gene cluster that mediates the catabolism of quinic acid (QA) and as such, allows the use of QA as a sole carbon source. Catalyzes the third reaction in the inducible quinic acid catabolic pathway by converting dehydroshikimate to protocatechuate. The qa cluster encodes 3 inducible enymes (qa-2, qa-3 and qa-4) catalyzing the first three reactions in the catabolism of quinic acid to protocatechuic acid (also known as 3,4-Dihydroxybenzoic acid). This chain is 3-dehydroshikimate dehydratase, found in Neurospora crassa (strain ATCC 24698 / 74-OR23-1A / CBS 708.71 / DSM 1257 / FGSC 987).